The following is a 115-amino-acid chain: Vespryn (115 aa).

An N-terminal signal peptide occupies residues 1 to 15; the sequence is MTWLLLCLLAQYENG. The 94-residue stretch at 22 to 115 folds into the B30.2/SPRY domain; the sequence is SSSAKPYKTS…VKRKDHLRLT (94 aa).

Belongs to the ohanin/vespryn family. Expressed by the venom gland.

The protein localises to the secreted. Neurotoxin that produces dose-dependent hypolocomotion and hyperalgesia in mice. May directly act on the central nervous system, as it is 6500-fold more potent when administered intracerebroventricularly than intraperitoneal. This is Vespryn from Pogona barbata (Bearded dragon).